The primary structure comprises 362 residues: Putative gustatory receptor 89a (362 aa).

Topologically, residues 1–38 (MLRFPHVCGLCLLLKYWQILALAPFRTSEPMVARCQRW) are cytoplasmic. A helical membrane pass occupies residues 39–59 (MTLIAVFRWLLLTSMAPFVLW). At 60-74 (KSAAMYEATNVRHSM) the chain is on the extracellular side. Residues 75–95 (VFKTIALATMTGDVCISLALL) form a helical membrane-spanning segment. Residues 96–126 (GNHLWNRRELANLVNDLARLHRRRRLSWWST) lie on the Cytoplasmic side of the membrane. The chain crosses the membrane as a helical span at residues 127 to 147 (LFLWLKLLLSLYDLLCSVPFL). The Extracellular portion of the chain corresponds to 148–166 (KGAGGRLPWSQLVAYGVQL). A helical transmembrane segment spans residues 167–187 (YFQHVASVYGNGIFGGILLML). Topologically, residues 188–223 (ECYNQLEREEPTNLARLLQKEYSWLRLIQRFVKLFQ) are cytoplasmic. A helical transmembrane segment spans residues 224 to 244 (LGIFLLVLGSFVNIMVNIYAF). At 245–255 (MSYYVSLHGVP) the chain is on the extracellular side. A helical membrane pass occupies residues 256 to 276 (LTISNNCLVLAIQLYAVILAA). Over 277–333 (HLCQVRSAKLRKKCLQLEYVPEGLTQEQAMASTPFPVLTPTGNVKFRILGVFILDNS) the chain is Cytoplasmic. A helical transmembrane segment spans residues 334 to 354 (FWLFLVSYAMNFIVVILQTSF). Residues 355 to 362 (EHINHGEI) lie on the Extracellular side of the membrane.

The protein belongs to the insect chemoreceptor superfamily. Gustatory receptor (GR) family. Gr77a subfamily.

It is found in the cell membrane. In terms of biological role, probable gustatory receptor which mediates acceptance or avoidance behavior, depending on its substrates. The sequence is that of Putative gustatory receptor 89a (Gr89a) from Drosophila melanogaster (Fruit fly).